Here is a 150-residue protein sequence, read N- to C-terminus: Large ribosomal subunit protein bL9 (150 aa).

The protein belongs to the bacterial ribosomal protein bL9 family.

Its function is as follows. Binds to the 23S rRNA. The sequence is that of Large ribosomal subunit protein bL9 from Shewanella sediminis (strain HAW-EB3).